The sequence spans 515 residues: 13S globulin seed storage protein (515 aa).

The first 22 residues, 1 to 22, serve as a signal peptide directing secretion; that stretch reads MSTKLILSFSLCLMVLSCSAQA. The segment at 23 to 96 is igE-binding epitope; it reads AQLWPWRKGQ…RYVIQPGGLL (74 aa). 2 cysteine pairs are disulfide-bonded: Cys47–Cys80 and Cys123–Cys327. The region spanning 52–272 is the Cupin type-1 1 domain; sequence LTASEPSRRV…FRDVDRETIS (221 aa). The segment at 97 to 172 is igE-binding epitope with a very strong IgE-binding activity; the sequence is LPSYSNAPYI…REGDVIPSPA (76 aa). Disordered stretches follow at residues 123-156, 210-241, and 295-320; these read CPETFQSDSEYPQSQRGQHSRESESQESSRGDQH, LAGQSQQGREERRSQQQTREEGGDRQSRESDD, and PEDSEEGYERQRGDRKRDERGSGRSN. 3 stretches are compositionally biased toward basic and acidic residues: residues 141–156, 217–239, and 295–316; these read HSRESESQESSRGDQH, GREERRSQQQTREEGGDRQSRES, and PEDSEEGYERQRGDRKRDERGS. IgE-binding epitope stretches follow at residues 173-248 and 249-320; these read GVVQ…LIGA and NILS…GRSN. The region spanning 333 to 482 is the Cupin type-1 2 domain; the sequence is QNVNRPSHAD…SYDISTEEAY (150 aa). The igE-binding epitope with a strong IgE-binding activity stretch occupies residues 347-387; the sequence is RAGRINTVNSNNLPILEFLQLSAQHVVLYKNAIIGPRWNLN. 3 igE-binding epitope regions span residues 407–457, 440–476, and 475–511; these read EGKS…PIAG, EWVELKNNDNAITSPIAGRTSVLRAIPVEVLANSYDI, and DISTEEAYKLKNGRQEVEVFRPFQSRYEKEEEKERER.

Belongs to the 11S seed storage protein (globulins) family. As to quaternary structure, homohexamer. Post-translationally, proteolytically processed from a single precursor to produce an acidic and a basic chain that are linked by a disulfide bond. In terms of tissue distribution, expressed in seeds (at protein level).

Functionally, seed storage protein. In Fagopyrum tataricum (Tartarian buckwheat), this protein is 13S globulin seed storage protein.